Here is a 256-residue protein sequence, read N- to C-terminus: Homeobox protein Hox-D13a (256 aa).

A DNA-binding region (homeobox) is located at residues 191–250 (GRKKRVPYTKFQLKELEREYNTTKFITKENRRRIASSTNLSERQVTIWFQNRRVKDKKRP).

It belongs to the Abd-B homeobox family.

It is found in the nucleus. Functionally, sequence-specific transcription factor which is part of a developmental regulatory system that provides cells with specific positional identities on the anterior-posterior axis. The protein is Homeobox protein Hox-D13a (hoxd13a) of Danio rerio (Zebrafish).